Reading from the N-terminus, the 366-residue chain is Nitronate monooxygenase (366 aa).

FMN is bound by residues Asn74, Gln181, Gly186, Gly223, and 242-245; that span reads QLGT.

Belongs to the nitronate monooxygenase family. NMO class I subfamily. FMN is required as a cofactor.

The catalysed reaction is 3 propionate 3-nitronate + 3 O2 + H2O = 3 3-oxopropanoate + 2 nitrate + nitrite + H2O2 + 3 H(+). Functionally, nitronate monooxygenase that uses molecular oxygen to catalyze the oxidative denitrification of alkyl nitronates. Acts on propionate 3-nitronate (P3N), the presumed physiological substrate. Is likely involved in the degradation of P3N, that allows B.phytofirmans PsJN to grow on 3-nitropropionate/P3N as the sole source of nitrogen and carbon. Also probably functions in the detoxification of P3N, a metabolic poison produced by plants and fungi as a defense mechanism. Cannot oxidize nitroalkanes such as 3-nitropropionate, nitroethane, or 1-nitropropane. The polypeptide is Nitronate monooxygenase (Paraburkholderia phytofirmans (strain DSM 17436 / LMG 22146 / PsJN) (Burkholderia phytofirmans)).